A 128-amino-acid polypeptide reads, in one-letter code: Iron-sulfur cluster insertion protein ErpA 1 (128 aa).

Residues cysteine 47, cysteine 111, and cysteine 113 each contribute to the iron-sulfur cluster site.

Belongs to the HesB/IscA family. As to quaternary structure, homodimer. Iron-sulfur cluster serves as cofactor.

In terms of biological role, required for insertion of 4Fe-4S clusters for at least IspG. This Methylococcus capsulatus (strain ATCC 33009 / NCIMB 11132 / Bath) protein is Iron-sulfur cluster insertion protein ErpA 1.